A 475-amino-acid chain; its full sequence is 23S rRNA (uracil(1939)-C(5))-methyltransferase RlmD (475 aa).

One can recognise a TRAM domain in the interval 1 to 76; the sequence is MHRGDKPVNI…SRFSKAKVRE (76 aa). [4Fe-4S] cluster is bound by residues cysteine 89, cysteine 95, cysteine 98, and cysteine 178. The S-adenosyl-L-methionine site is built by glutamine 299, phenylalanine 328, asparagine 333, glutamate 349, aspartate 377, and aspartate 398. Cysteine 431 (nucleophile) is an active-site residue.

The protein belongs to the class I-like SAM-binding methyltransferase superfamily. RNA M5U methyltransferase family. RlmD subfamily.

It catalyses the reaction uridine(1939) in 23S rRNA + S-adenosyl-L-methionine = 5-methyluridine(1939) in 23S rRNA + S-adenosyl-L-homocysteine + H(+). Functionally, catalyzes the formation of 5-methyl-uridine at position 1939 (m5U1939) in 23S rRNA. The sequence is that of 23S rRNA (uracil(1939)-C(5))-methyltransferase RlmD from Polynucleobacter necessarius subsp. necessarius (strain STIR1).